We begin with the raw amino-acid sequence, 145 residues long: Neutral phospholipase A2 homolog taipoxin beta chain 1 (145 aa).

The N-terminal stretch at 1–27 (MHPAHLLVLLAVCVSLLGASDIPPLPL) is a signal peptide. 7 cysteine pairs are disulfide-bonded: C38-C98, C54-C144, C56-C72, C71-C125, C78-C118, C87-C111, and C105-C116.

It belongs to the phospholipase A2 family. Group I subfamily. D49 sub-subfamily. Heterotrimer of alpha, beta, and gamma chains; non-covalently linked. In terms of tissue distribution, expressed by the venom gland.

The protein localises to the secreted. Its function is as follows. Heterotrimer: Snake venom phospholipase A2 (PLA2) heterotrimer that acts as a potent presynaptic neurotoxin by blocking synaptic transmission and synaptic vesicle recycling. May act by binding in a calcium-dependent fashion to neurotonal pentraxin-1 (NPTX1) and neurotonal pentraxin-2 (NPTX2), but not to neuronal pentraxin receptor (NPTXR). Also binds to taipoxin-associated calcium binding protein 49 (RCN2), a protein localized in the lumen of endoplasmic reticulum. Monomer (beta chain): Snake venom phospholipase A2 homolog that is neither toxic nor enzymatically active. Does not bind calcium. The chain is Neutral phospholipase A2 homolog taipoxin beta chain 1 from Oxyuranus scutellatus scutellatus (Australian taipan).